The chain runs to 492 residues: GTPase Der (492 aa).

The EngA-type G 1 domain maps to P3–A166. GTP-binding positions include G9 to S16, D56 to I60, and N118 to D121. The segment at A166–G190 is disordered. A compositionally biased stretch (acidic residues) spans E168–E181. One can recognise an EngA-type G 2 domain in the interval I197–V370. Residues G203 to S210, D250 to V254, and N315 to D318 each bind GTP. In terms of domain architecture, KH-like spans T371–E455. Positions G453 to K492 are disordered. Residues N461–V470 are compositionally biased toward basic and acidic residues. The segment covering N471–K492 has biased composition (basic residues).

This sequence belongs to the TRAFAC class TrmE-Era-EngA-EngB-Septin-like GTPase superfamily. EngA (Der) GTPase family. Associates with the 50S ribosomal subunit.

Its function is as follows. GTPase that plays an essential role in the late steps of ribosome biogenesis. This chain is GTPase Der, found in Ectopseudomonas mendocina (strain ymp) (Pseudomonas mendocina).